The following is a 312-amino-acid chain: DNA-directed RNA polymerase subunit alpha (312 aa).

An alpha N-terminal domain (alpha-NTD) region spans residues 1–226; it reads MIEFEKPIIT…EHLNLFTDLT (226 aa). The segment at 243 to 312 is alpha C-terminal domain (alpha-CTD); sequence DEKVLDRTIE…DLGLGLKNDK (70 aa).

Belongs to the RNA polymerase alpha chain family. Homodimer. The RNAP catalytic core consists of 2 alpha, 1 beta, 1 beta' and 1 omega subunit. When a sigma factor is associated with the core the holoenzyme is formed, which can initiate transcription.

The enzyme catalyses RNA(n) + a ribonucleoside 5'-triphosphate = RNA(n+1) + diphosphate. DNA-dependent RNA polymerase catalyzes the transcription of DNA into RNA using the four ribonucleoside triphosphates as substrates. The sequence is that of DNA-directed RNA polymerase subunit alpha from Streptococcus pyogenes serotype M1.